The primary structure comprises 144 residues: Single-stranded DNA-binding protein 3 (144 aa).

The SSB domain occupies 1 to 103 (MNKVVLIGRL…IVAEEVQFLE (103 aa)). Residues 112-134 (MANDQFNNGNENGSMQLPDNNDI) are compositionally biased toward polar residues. The interval 112–144 (MANDQFNNGNENGSMQLPDNNDITPIDDGDIPF) is disordered.

Homotetramer.

The polypeptide is Single-stranded DNA-binding protein 3 (ssb3) (Clostridium acetobutylicum (strain ATCC 824 / DSM 792 / JCM 1419 / IAM 19013 / LMG 5710 / NBRC 13948 / NRRL B-527 / VKM B-1787 / 2291 / W)).